Consider the following 126-residue polypeptide: Holo-[acyl-carrier-protein] synthase (126 aa).

2 residues coordinate Mg(2+): D8 and E59.

The protein belongs to the P-Pant transferase superfamily. AcpS family. Mg(2+) is required as a cofactor.

It localises to the cytoplasm. It carries out the reaction apo-[ACP] + CoA = holo-[ACP] + adenosine 3',5'-bisphosphate + H(+). Transfers the 4'-phosphopantetheine moiety from coenzyme A to a Ser of acyl-carrier-protein. The chain is Holo-[acyl-carrier-protein] synthase from Rickettsia prowazekii (strain Madrid E).